Reading from the N-terminus, the 507-residue chain is Fluoroacetaldehyde dehydrogenase (507 aa).

219–225 lines the NAD(+) pocket; the sequence is GFGIEAG. Catalysis depends on residues glutamate 263 and cysteine 302.

It belongs to the aldehyde dehydrogenase family. In terms of assembly, homotetramer.

The enzyme catalyses fluoroacetaldehyde + NAD(+) + H2O = fluoroacetate + NADH + 2 H(+). Its function is as follows. Catalyzes the oxidation of fluoroacetaldehyde to fluoroacetate. Has high affinity for fluoroacetate and glycolaldehyde but not for acetaldehyde. The polypeptide is Fluoroacetaldehyde dehydrogenase (Streptantibioticus cattleyicolor (strain ATCC 35852 / DSM 46488 / JCM 4925 / NBRC 14057 / NRRL 8057) (Streptomyces cattleya)).